The chain runs to 665 residues: E3 ubiquitin-protein ligase cblA (665 aa).

The segment at 30-50 (NNNNNINNNNNNNNINSNNNG) is disordered. Positions 109 to 231 (TSLVNYIHYE…NNENNNNNNN (123 aa)) are 4H. The Cbl-PTB domain occupies 109-400 (TSLVNYIHYE…PDIFKSILSF (292 aa)). The interval 232–306 (NYNPYELLSN…FKLSVFIKWF (75 aa)) is EF-hand-like. Residues Asp-287, Thr-289, Asp-291, and Tyr-293 each coordinate Ca(2+). An SH2-like region spans residues 307–400 (GALPVSLGIF…PDIFKSILSF (94 aa)). Disordered stretches follow at residues 437–456 (ENNN…INTF) and 467–609 (DSSN…NNNN). A compositionally biased stretch (low complexity) spans 467–478 (DSSNSSDTNKSP). A coiled-coil region spans residues 479–544 (TKSRKSSFKN…NNNNNNNNNN (66 aa)). Residues 486 to 512 (FKNDKDKKEKEKEKGKDKEKEKERVSD) are compositionally biased toward basic and acidic residues. Low complexity-rich tracts occupy residues 530-561 (NNNN…NNNN) and 571-609 (TSNG…NNNN). The segment at 618-653 (CTVCMDNEINTVFLECGHLSCCSLCSVKLKKCPICR) adopts an RING-type zinc-finger fold.

Post-translationally, ubiquitinated.

It localises to the cytoplasm. The protein resides in the nucleus. It carries out the reaction S-ubiquitinyl-[E2 ubiquitin-conjugating enzyme]-L-cysteine + [acceptor protein]-L-lysine = [E2 ubiquitin-conjugating enzyme]-L-cysteine + N(6)-ubiquitinyl-[acceptor protein]-L-lysine.. Its pathway is protein modification; protein ubiquitination. Its function is as follows. Acts as an E3 ubiquitin-protein ligase, which accepts ubiquitin from specific E2 ubiquitin-conjugating enzymes, and then transfers it to substrates promoting their degradation by the proteasome. Up-regulates STATc tyrosine phosphorylation via an inhibitory effect on ptpC accumulation. Recognizes activated receptor tyrosine kinases, RTKs and terminates signaling. This chain is E3 ubiquitin-protein ligase cblA (cblA-1), found in Dictyostelium discoideum (Social amoeba).